A 1281-amino-acid chain; its full sequence is Angiotensin-converting enzyme (1281 aa).

An N-terminal signal peptide occupies residues 1-17 (MPAALGLLLPWLSLVGA). At 18–1241 (LQPGLEPPQS…MSVGTKQATA (1224 aa)) the chain is on the extracellular side. Peptidase M2 domains are found at residues 28-610 (DPTE…LGWP) and 629-1208 (IVDE…LGWP). N-linked (GlcNAc...) asparagine glycans are attached at residues Asn-42, Asn-62, Asn-80, Asn-99, and Asn-148. The cysteines at positions 145 and 151 are disulfide-linked. Residue Tyr-217 participates in chloride binding. N-linked (GlcNAc...) asparagine glycosylation is present at Asn-304. Cys-345 and Cys-363 are oxidised to a cystine. His-376 contacts Zn(2+). The active-site Proton acceptor 1 is Glu-377. The Zn(2+) site is built by His-380 and Glu-404. N-linked (GlcNAc...) asparagine glycosylation is present at Asn-495. Residue His-506 is the Proton donor 1 of the active site. Arg-515 serves as a coordination point for chloride. Cysteines 531 and 543 form a disulfide. N-linked (GlcNAc...) asparagine glycans are attached at residues Asn-535, Asn-573, Asn-601, Asn-643, Asn-663, and Asn-746. The cysteines at positions 743 and 749 are disulfide-linked. 2 residues coordinate chloride: Arg-777 and Tyr-815. The cysteines at positions 943 and 961 are disulfide-linked. His-974 lines the Zn(2+) pocket. Glu-975 (proton acceptor 2) is an active-site residue. Residues His-978 and Glu-1002 each contribute to the Zn(2+) site. Trp-1076 and Arg-1080 together coordinate chloride. His-1104 (proton donor 2) is an active-site residue. Arg-1113 provides a ligand contact to chloride. A disulfide bridge connects residues Cys-1129 and Cys-1141. Asn-1177 carries an N-linked (GlcNAc...) asparagine glycan. Positions 1201-1240 (NGEVLGWPEYSWTPYAVTEFHAATDTADFLGMSVGTKQAT) are juxtamembrane stalk. A helical membrane pass occupies residues 1242–1262 (GAWVLLALALVFLITSIFLGV). Over 1263–1281 (KLFSSRRKAFKSSSEMELK) the chain is Cytoplasmic.

The protein belongs to the peptidase M2 family. It depends on Zn(2+) as a cofactor. Chloride is required as a cofactor.

Its subcellular location is the cell membrane. The protein resides in the cytoplasm. The enzyme catalyses Release of a C-terminal dipeptide, oligopeptide-|-Xaa-Yaa, when Xaa is not Pro, and Yaa is neither Asp nor Glu. Thus, conversion of angiotensin I to angiotensin II, with increase in vasoconstrictor activity, but no action on angiotensin II.. The catalysed reaction is angiotensin I + H2O = L-histidyl-L-leucine + angiotensin II. It carries out the reaction bradykinin + H2O = L-Phe-L-Arg + bradykinin(1-7). It catalyses the reaction substance P + H2O = substance P(1-9) + L-Leu-L-Met-NH2. The enzyme catalyses substance P + H2O = substance P(1-8) + Gly-L-Leu-L-Met-NH2. The catalysed reaction is substance P + H2O = L-Phe-L-Phe-Gly-L-Leu-L-Met-NH2 + substance P(1-6). It carries out the reaction neurotensin + H2O = neurotensin(1-11) + L-isoleucyl-L-leucine. It catalyses the reaction goralatide + H2O = N-acetyl-L-seryl-L-aspartate + L-lysyl-L-proline. The enzyme catalyses Met-enkephalin + H2O = L-phenylalanyl-L-methionine + L-tyrosylglycylglycine. The catalysed reaction is Leu-enkephalin + H2O = L-tyrosylglycylglycine + L-phenylalanyl-L-leucine. It carries out the reaction Met-enkephalin-Arg-Phe + H2O = L-arginyl-L-phenylalanine + Met-enkephalin. Its function is as follows. Dipeptidyl carboxypeptidase that removes dipeptides from the C-terminus of a variety of circulating hormones, such as angiotensin I, bradykinin or enkephalins, thereby playing a key role in the regulation of blood pressure, electrolyte homeostasis or synaptic plasticity. Composed of two similar catalytic domains, each possessing a functional active site, with different selectivity for substrates. Plays a major role in the angiotensin-renin system that regulates blood pressure and sodium retention by the kidney by converting angiotensin I to angiotensin II, resulting in an increase of the vasoconstrictor activity of angiotensin. Also able to inactivate bradykinin, a potent vasodilator, and therefore enhance the blood pressure response. Acts as a regulator of synaptic transmission by mediating cleavage of neuropeptide hormones, such as substance P, neurotensin or enkephalins. Catalyzes degradation of different enkephalin neuropeptides (Met-enkephalin, Leu-enkephalin, Met-enkephalin-Arg-Phe and possibly Met-enkephalin-Arg-Gly-Leu). Also acts as a regulator of hematopoietic stem cell differentiation by mediating degradation of hemoregulatory peptide N-acetyl-SDKP (AcSDKP). In Gallus gallus (Chicken), this protein is Angiotensin-converting enzyme.